The chain runs to 402 residues: Thyroid hormone receptor alpha (402 aa).

The tract at residues 1 to 22 (MEQKPSTLDPLSEPEDTRWLDG) is disordered. The interval 1–50 (MEQKPSTLDPLSEPEDTRWLDGKRKRKSSQCLVKSSMSGYIPSYLDKDEQ) is modulating. A Phosphoserine; by CK2 modification is found at Ser12. Phosphoserine is present on Ser28. Zn(2+) is bound by residues Cys51, Cys54, Cys68, Cys71, Cys89, Cys95, Cys105, and Cys108. 2 NR C4-type zinc fingers span residues 51–71 (CVVC…CAGC) and 89–113 (CKYD…FKKC). Positions 51-125 (CVVCGDKATG…VGMAMDLVLY (75 aa)) form a DNA-binding region, nuclear receptor. One can recognise an NR LBD domain in the interval 161-402 (EEWELIHVVT…ELFPPLFLEV (242 aa)). Arg226 and Ser275 together coordinate 3,3',5-triiodo-L-thyronine.

Belongs to the nuclear hormone receptor family. NR1 subfamily. In terms of assembly, probably interacts with SFPQ.

The protein resides in the nucleus. Functionally, nuclear hormone receptor that can act as a repressor or activator of transcription. High affinity receptor for thyroid hormones, including triiodothyronine and thyroxine. In Pygoscelis adeliae (Adelie penguin), this protein is Thyroid hormone receptor alpha (THRA).